Reading from the N-terminus, the 204-residue chain is Ribonuclease HII (204 aa).

In terms of domain architecture, RNase H type-2 spans 1–197; that stretch reads MILGIDEAGR…KNCILNPKLL (197 aa). The a divalent metal cation site is built by Asp6, Glu7, and Asp103.

This sequence belongs to the RNase HII family. It depends on Mn(2+) as a cofactor. Mg(2+) serves as cofactor.

It is found in the cytoplasm. It carries out the reaction Endonucleolytic cleavage to 5'-phosphomonoester.. Endonuclease that specifically degrades the RNA of RNA-DNA hybrids. The sequence is that of Ribonuclease HII from Helicobacter pylori (strain P12).